We begin with the raw amino-acid sequence, 386 residues long: Porin PorA (386 aa).

Residues 1–35 (MKRTLGHALIIIGAALIVIAVLLPTFLVPRLRVIP) form the signal peptide. Residues 53-63 (DSSQLGKNEPT) are compositionally biased toward polar residues. Positions 53-78 (DSSQLGKNEPTPNRKNDPRCKAETDE) are disordered. The span at 64–78 (PNRKNDPRCKAETDE) shows a compositional bias: basic and acidic residues.

This sequence belongs to the PorA family.

It localises to the secreted. The protein localises to the cell wall. In terms of biological role, forms water-filled channels that favor the permeation of cations. The chain is Porin PorA from Corynebacterium amycolatum.